The following is a 1928-amino-acid chain: Myosin-1 (1928 aa).

The region spanning 8-71 (SSNMIVWIPD…RISDVFPVNP (64 aa)) is the Myosin N-terminal SH3-like domain. One can recognise a Myosin motor domain in the interval 75–791 (DKVENMSELT…VLADLEKQKD (717 aa)). 180–187 (GESGAGKT) serves as a coordination point for ATP. An actin-binding region spans residues 460-529 (IGLLDIAGFE…LQLTIDLIES (70 aa)). Residues 629-641 (SSSAGVEANISNQ) are compositionally biased toward polar residues. The segment at 629-657 (SSSAGVEANISNQEVKKSARTSTFKTTSS) is disordered. The IQ domain maps to 794-823 (LNNIMIKLTATIRGYTVRKEITYHLQKLKK). A coiled-coil region spans residues 856–1911 (SSNDMTRTKK…FWKSRYESTM (1056 aa)).

It belongs to the TRAFAC class myosin-kinesin ATPase superfamily. Myosin family.

Required for cell division. The polypeptide is Myosin-1 (MYO1) (Saccharomyces cerevisiae (strain ATCC 204508 / S288c) (Baker's yeast)).